A 75-amino-acid chain; its full sequence is MARKETNYESMVSELNEIVKQLENGDLTLEESIKSYENGVKIVNKLYKKLSTLEGKIKVVEDEKEEDFGGYSNEY.

The protein belongs to the XseB family. In terms of assembly, heterooligomer composed of large and small subunits.

It is found in the cytoplasm. The catalysed reaction is Exonucleolytic cleavage in either 5'- to 3'- or 3'- to 5'-direction to yield nucleoside 5'-phosphates.. Functionally, bidirectionally degrades single-stranded DNA into large acid-insoluble oligonucleotides, which are then degraded further into small acid-soluble oligonucleotides. This chain is Exodeoxyribonuclease 7 small subunit, found in Clostridium perfringens (strain ATCC 13124 / DSM 756 / JCM 1290 / NCIMB 6125 / NCTC 8237 / Type A).